A 335-amino-acid polypeptide reads, in one-letter code: Glutamyl-tRNA reductase (335 aa).

Residues 60-63 (TCHR), serine 110, 115-117 (ETE), and glutamine 121 each bind substrate. The Nucleophile role is filled by cysteine 61. NADP(+) is bound at residue 189 to 194 (GYSEIN).

Belongs to the glutamyl-tRNA reductase family. Homodimer.

It carries out the reaction (S)-4-amino-5-oxopentanoate + tRNA(Glu) + NADP(+) = L-glutamyl-tRNA(Glu) + NADPH + H(+). It functions in the pathway porphyrin-containing compound metabolism; protoporphyrin-IX biosynthesis; 5-aminolevulinate from L-glutamyl-tRNA(Glu): step 1/2. In terms of biological role, catalyzes the NADPH-dependent reduction of glutamyl-tRNA(Glu) to glutamate 1-semialdehyde (GSA). The polypeptide is Glutamyl-tRNA reductase (Chlamydia trachomatis serovar L2 (strain ATCC VR-902B / DSM 19102 / 434/Bu)).